The chain runs to 471 residues: Ribosomal protein uS12 methylthiotransferase RimO (471 aa).

The MTTase N-terminal domain occupies 19 to 134 (PRVGFVSLGC…VMNAVHTHLP (116 aa)). [4Fe-4S] cluster is bound by residues C28, C64, C93, C169, C173, and C176. Positions 155–396 (LTPRHYAYLK…MAVAEEVSTA (242 aa)) constitute a Radical SAM core domain. Residues 399 to 471 (QKRVGQTMQV…QGHDLVGQPV (73 aa)) form the TRAM domain.

Belongs to the methylthiotransferase family. RimO subfamily. [4Fe-4S] cluster is required as a cofactor.

It localises to the cytoplasm. The enzyme catalyses L-aspartate(89)-[ribosomal protein uS12]-hydrogen + (sulfur carrier)-SH + AH2 + 2 S-adenosyl-L-methionine = 3-methylsulfanyl-L-aspartate(89)-[ribosomal protein uS12]-hydrogen + (sulfur carrier)-H + 5'-deoxyadenosine + L-methionine + A + S-adenosyl-L-homocysteine + 2 H(+). Catalyzes the methylthiolation of an aspartic acid residue of ribosomal protein uS12. The polypeptide is Ribosomal protein uS12 methylthiotransferase RimO (Delftia acidovorans (strain DSM 14801 / SPH-1)).